We begin with the raw amino-acid sequence, 481 residues long: Aspartyl/glutamyl-tRNA(Asn/Gln) amidotransferase subunit B (481 aa).

The protein belongs to the GatB/GatE family. GatB subfamily. As to quaternary structure, heterotrimer of A, B and C subunits.

The catalysed reaction is L-glutamyl-tRNA(Gln) + L-glutamine + ATP + H2O = L-glutaminyl-tRNA(Gln) + L-glutamate + ADP + phosphate + H(+). The enzyme catalyses L-aspartyl-tRNA(Asn) + L-glutamine + ATP + H2O = L-asparaginyl-tRNA(Asn) + L-glutamate + ADP + phosphate + 2 H(+). Allows the formation of correctly charged Asn-tRNA(Asn) or Gln-tRNA(Gln) through the transamidation of misacylated Asp-tRNA(Asn) or Glu-tRNA(Gln) in organisms which lack either or both of asparaginyl-tRNA or glutaminyl-tRNA synthetases. The reaction takes place in the presence of glutamine and ATP through an activated phospho-Asp-tRNA(Asn) or phospho-Glu-tRNA(Gln). The protein is Aspartyl/glutamyl-tRNA(Asn/Gln) amidotransferase subunit B of Pseudomonas paraeruginosa (strain DSM 24068 / PA7) (Pseudomonas aeruginosa (strain PA7)).